Reading from the N-terminus, the 321-residue chain is uncharacterized protein (321 aa).

Catalysis depends on Tyr49, which acts as the Proton donor. Residue His106 participates in substrate binding.

Belongs to the aldo/keto reductase family.

This is an uncharacterized protein from Caenorhabditis elegans.